The following is a 628-amino-acid chain: Translation factor GUF1, mitochondrial (628 aa).

The tr-type G domain maps to 27 to 209 (LPSRNFSIIA…AIISRIPPPS (183 aa)). GTP contacts are provided by residues 36–43 (AHIDHGKS), 102–106 (DTPGH), and 156–159 (NKID).

It belongs to the TRAFAC class translation factor GTPase superfamily. Classic translation factor GTPase family. LepA subfamily.

It localises to the mitochondrion inner membrane. The enzyme catalyses GTP + H2O = GDP + phosphate + H(+). Its function is as follows. Promotes mitochondrial protein synthesis. May act as a fidelity factor of the translation reaction, by catalyzing a one-codon backward translocation of tRNAs on improperly translocated ribosomes. Binds to mitochondrial ribosomes in a GTP-dependent manner. In Laccaria bicolor (strain S238N-H82 / ATCC MYA-4686) (Bicoloured deceiver), this protein is Translation factor GUF1, mitochondrial.